The sequence spans 328 residues: Sin3 histone deacetylase corepressor complex component SDS3 (328 aa).

Residues 1–22 show a composition bias toward low complexity; the sequence is MSAAGLLAPAPAPAAAPAAPEY. The tract at residues 1–69 is disordered; the sequence is MSAAGLLAPA…HDEEDYVEMK (69 aa). Ser2 carries the post-translational modification N-acetylserine. The interval 2 to 170 is mediates interaction with USP17L2; it reads SAAGLLAPAP…IENEKLTMEL (169 aa). Acidic residues-rich tracts occupy residues 23 to 37 and 45 to 54; these read YPED…EDDE and SDEDTEDASE. Phosphoserine is present on residues Ser32 and Ser45. Thr49 carries the post-translational modification Phosphothreonine. Phosphoserine is present on Ser53. A compositionally biased stretch (basic and acidic residues) spans 56–69; it reads DLAKHDEEDYVEMK. Residues 66–171 are a coiled coil; that stretch reads VEMKEQMYQD…ENEKLTMELT (106 aa). Residues Lys69, Lys178, and Lys201 each participate in a glycyl lysine isopeptide (Lys-Gly) (interchain with G-Cter in SUMO2) cross-link. A sin3 interaction domain (SID) region spans residues 188 to 226; the sequence is RPNDPVPIPDKRRKPAPAQLNYLLTDEQIMEDLRTLNKL. The tract at residues 226–252 is disordered; sequence LKSPKRPASPSSPEHLPATPAESPAQR. 3 positions are modified to phosphoserine: Ser228, Ser234, and Ser237. A Phosphothreonine modification is found at Thr244.

The protein belongs to the SDS3 family. In terms of assembly, interacts with HCFC1. Homodimer. Component of the SIN3 histone deacetylase (HDAC) corepressor complex. Interacts with SIN3A. Interaction with SIN3B enhances the interaction between SIN3B and HDAC1 to form a complex. Component of a mSin3A corepressor complex that contains SIN3A, SAP130, SUDS3/SAP45, ARID4B/SAP180, HDAC1 and HDAC2. Interacts with USP17L2; the interaction is direct. Interacts with FOXK2. In terms of processing, polyubiquitinated. 'Lys-63'-polyubiquitinated SUDS3 positively regulates histone deacetylation. Regulated through deubiquitination by USP17L2/USP17 that cleaves 'Lys-63'-linked ubiquitin chains. In terms of tissue distribution, expressed in all newborn tissues tested, including brain, kidney and liver.

Its subcellular location is the nucleus. In terms of biological role, regulatory protein which represses transcription and augments histone deacetylase activity of HDAC1. May have a potential role in tumor suppressor pathways through regulation of apoptosis. May function in the assembly and/or enzymatic activity of the mSin3A corepressor complex or in mediating interactions between the complex and other regulatory complexes. This Mus musculus (Mouse) protein is Sin3 histone deacetylase corepressor complex component SDS3 (Suds3).